The chain runs to 805 residues: Arginine/serine-rich protein PNISR (805 aa).

A compositionally biased stretch (polar residues) spans 75–88; sequence NNHGNFQGDSNFNR. Disordered stretches follow at residues 75–331 and 382–805; these read NNHG…EEKE and LTGL…SRSR. Pro residues-rich tracts occupy residues 100–115 and 183–194; these read PPHP…PAPG and YWQPGPPGPPAP. Basic and acidic residues predominate over residues 197–210; the sequence is NRRERPPSFRDRQR. Phosphoserine occurs at positions 204 and 211. A Glycyl lysine isopeptide (Lys-Gly) (interchain with G-Cter in SUMO2) cross-link involves residue K218. A coiled-coil region spans residues 237-276; the sequence is REGLEKMEREKQKKLEKERMEQQRSQLSKKEKKATEDAEG. Basic and acidic residues predominate over residues 238 to 258; it reads EGLEKMEREKQKKLEKERMEQ. Phosphoserine occurs at positions 290, 304, 313, and 321. Residues 290 to 299 are compositionally biased toward acidic residues; that stretch reads SDEEDEDAEN. Over residues 384-393 the composition is skewed to gly residues; it reads GLGGLGGYGS. The segment covering 421-463 has biased composition (basic and acidic residues); sequence QKQEAFWRKEKEQQLLQDKQIEEEKQQTERVTKEMNEFIHREQ. Residues 427-461 are a coiled coil; sequence WRKEKEQQLLQDKQIEEEKQQTERVTKEMNEFIHR. 2 positions are modified to phosphoserine: S465 and S467. Basic and acidic residues-rich tracts occupy residues 473–486 and 494–508; these read EADR…KRTP and EPKR…ERGS. T485 carries the phosphothreonine modification. Residue K496 forms a Glycyl lysine isopeptide (Lys-Gly) (interchain with G-Cter in SUMO2) linkage. Residues 509–550 show a composition bias toward low complexity; the sequence is RSGSSSSGSSSSGSRTSSSSSSVSSSSYSSSSGSSCTSSRSS. Basic residues-rich tracts occupy residues 551-560, 567-579, 587-598, and 607-639; these read SPKRRKRPSR, KARR…YSRR, TRGKLRDRRRSN, and RRNR…SRDR. Positions 659–721 are enriched in basic and acidic residues; sequence EAKEQDRKKE…KRKRESERTF (63 aa). K703 participates in a covalent cross-link: Glycyl lysine isopeptide (Lys-Gly) (interchain with G-Cter in SUMO2). S726 carries the post-translational modification Phosphoserine. Positions 732-753 are enriched in basic and acidic residues; sequence IRHDSRQDSKKNATKDSKRHSG. Over residues 754–767 the composition is skewed to low complexity; that stretch reads SDSSGRSSSESPGS. Basic residues-rich tracts occupy residues 771 to 781 and 789 to 805; these read KKAKKPKHSRS and RSGK…SRSR.

It belongs to the splicing factor SR family. As to quaternary structure, interacts with PNN.

It is found in the nucleus speckle. This is Arginine/serine-rich protein PNISR (Pnisr) from Mus musculus (Mouse).